The following is a 311-amino-acid chain: Forkhead box protein R2 (311 aa).

Disordered stretches follow at residues 56–76 and 90–171; these read PPEM…PCEP and LGSQ…QSPE. The segment covering 115-128 has biased composition (basic and acidic residues); sequence QKDEGSNCSEDKVV. A compositionally biased stretch (low complexity) spans 129–143; it reads ESLPSSSSEQSPLQK. Acidic residues predominate over residues 153–164; the sequence is ELTEEEAEEPDD. The fork-head DNA-binding region spans 192 to 294; sequence RPPLNCSHLI…RVLAFAQRER (103 aa).

In terms of tissue distribution, expressed in breast cancer cell lines and primary cancer.

Its subcellular location is the nucleus. This Homo sapiens (Human) protein is Forkhead box protein R2 (FOXR2).